The sequence spans 189 residues: Interferon alpha-4 (189 aa).

An N-terminal signal peptide occupies residues Met1 to Gly23. Disulfide bonds link Cys24/Cys122 and Cys52/Cys162.

This sequence belongs to the alpha/beta interferon family.

The protein resides in the secreted. In terms of biological role, produced by macrophages, IFN-alpha have antiviral activities. Interferon stimulates the production of two enzymes: a protein kinase and an oligoadenylate synthetase. The sequence is that of Interferon alpha-4 (IFNA4) from Homo sapiens (Human).